A 558-amino-acid polypeptide reads, in one-letter code: Dihydroxy-acid dehydratase (558 aa).

Mg(2+) is bound at residue D78. C119 serves as a coordination point for [2Fe-2S] cluster. Residues D120 and K121 each coordinate Mg(2+). K121 is subject to N6-carboxylysine. Residue C192 coordinates [2Fe-2S] cluster. E446 is a Mg(2+) binding site. The Proton acceptor role is filled by S472.

It belongs to the IlvD/Edd family. Homodimer. [2Fe-2S] cluster serves as cofactor. Requires Mg(2+) as cofactor.

It carries out the reaction (2R)-2,3-dihydroxy-3-methylbutanoate = 3-methyl-2-oxobutanoate + H2O. It catalyses the reaction (2R,3R)-2,3-dihydroxy-3-methylpentanoate = (S)-3-methyl-2-oxopentanoate + H2O. The protein operates within amino-acid biosynthesis; L-isoleucine biosynthesis; L-isoleucine from 2-oxobutanoate: step 3/4. It participates in amino-acid biosynthesis; L-valine biosynthesis; L-valine from pyruvate: step 3/4. Its function is as follows. Functions in the biosynthesis of branched-chain amino acids. Catalyzes the dehydration of (2R,3R)-2,3-dihydroxy-3-methylpentanoate (2,3-dihydroxy-3-methylvalerate) into 2-oxo-3-methylpentanoate (2-oxo-3-methylvalerate) and of (2R)-2,3-dihydroxy-3-methylbutanoate (2,3-dihydroxyisovalerate) into 2-oxo-3-methylbutanoate (2-oxoisovalerate), the penultimate precursor to L-isoleucine and L-valine, respectively. The protein is Dihydroxy-acid dehydratase of Campylobacter lari (strain RM2100 / D67 / ATCC BAA-1060).